The chain runs to 394 residues: 1-deoxy-D-xylulose 5-phosphate reductoisomerase (394 aa).

NADPH is bound by residues T14, G15, S16, I17, G40, and N128. K129 lines the 1-deoxy-D-xylulose 5-phosphate pocket. E130 contributes to the NADPH binding site. D154 is a Mn(2+) binding site. Residues S155, E156, S180, and H203 each coordinate 1-deoxy-D-xylulose 5-phosphate. Residue E156 coordinates Mn(2+). G209 contributes to the NADPH binding site. The 1-deoxy-D-xylulose 5-phosphate site is built by S216, N221, K222, and E225. E225 contributes to the Mn(2+) binding site.

This sequence belongs to the DXR family. Requires Mg(2+) as cofactor. It depends on Mn(2+) as a cofactor.

The catalysed reaction is 2-C-methyl-D-erythritol 4-phosphate + NADP(+) = 1-deoxy-D-xylulose 5-phosphate + NADPH + H(+). It functions in the pathway isoprenoid biosynthesis; isopentenyl diphosphate biosynthesis via DXP pathway; isopentenyl diphosphate from 1-deoxy-D-xylulose 5-phosphate: step 1/6. Functionally, catalyzes the NADPH-dependent rearrangement and reduction of 1-deoxy-D-xylulose-5-phosphate (DXP) to 2-C-methyl-D-erythritol 4-phosphate (MEP). The sequence is that of 1-deoxy-D-xylulose 5-phosphate reductoisomerase from Xylella fastidiosa (strain M12).